Reading from the N-terminus, the 497-residue chain is tRNA-2-methylthio-N(6)-dimethylallyladenosine synthase (497 aa).

Residues 1 to 48 form a disordered region; the sequence is MTGTSNIPTHGKEHKDAPALLPLPAPNTHHTHAAHPGDPSHDRHPSRG. A compositionally biased stretch (low complexity) spans 18 to 28; it reads PALLPLPAPNT. Residues 48 to 165 form the MTTase N-terminal domain; it reads GKLFIKTHGC…LPDMIRARRE (118 aa). Positions 57, 94, 128, 202, 206, and 209 each coordinate [4Fe-4S] cluster. A Radical SAM core domain is found at 188–430; sequence RAEGPSAFVS…QKHINAYAAD (243 aa). In terms of domain architecture, TRAM spans 433 to 496; sequence KRMIGTVQTV…TNSLRGRVHT (64 aa).

It belongs to the methylthiotransferase family. MiaB subfamily. As to quaternary structure, monomer. It depends on [4Fe-4S] cluster as a cofactor.

The protein resides in the cytoplasm. It catalyses the reaction N(6)-dimethylallyladenosine(37) in tRNA + (sulfur carrier)-SH + AH2 + 2 S-adenosyl-L-methionine = 2-methylsulfanyl-N(6)-dimethylallyladenosine(37) in tRNA + (sulfur carrier)-H + 5'-deoxyadenosine + L-methionine + A + S-adenosyl-L-homocysteine + 2 H(+). Its function is as follows. Catalyzes the methylthiolation of N6-(dimethylallyl)adenosine (i(6)A), leading to the formation of 2-methylthio-N6-(dimethylallyl)adenosine (ms(2)i(6)A) at position 37 in tRNAs that read codons beginning with uridine. This is tRNA-2-methylthio-N(6)-dimethylallyladenosine synthase from Xylella fastidiosa (strain M23).